The primary structure comprises 1079 residues: Translation initiation factor IF-2 (1079 aa).

3 stretches are compositionally biased toward basic and acidic residues: residues valine 52–asparagine 65, arginine 75–glutamate 90, and alanine 102–glutamine 134. The tract at residues valine 52–alanine 488 is disordered. The span at alanine 150 to threonine 184 shows a compositional bias: low complexity. Over residues valine 185–alanine 194 the composition is skewed to basic and acidic residues. A compositionally biased stretch (low complexity) spans alanine 276–glutamine 291. Residues glycine 306–glycine 327 are compositionally biased toward basic and acidic residues. Low complexity-rich tracts occupy residues glutamate 348–proline 370 and proline 380–proline 398. The segment covering proline 419 to glycine 429 has biased composition (gly residues). The segment covering proline 461–arginine 471 has biased composition (basic and acidic residues). The segment covering proline 473 to lysine 482 has biased composition (basic residues). A tr-type G domain is found at threonine 578 to glutamate 745. The segment at glycine 587 to threonine 594 is G1. Residue glycine 587–threonine 594 coordinates GTP. The interval glycine 612–histidine 616 is G2. The interval aspartate 633 to glycine 636 is G3. GTP is bound by residues aspartate 633–histidine 637 and asparagine 687–aspartate 690. A G4 region spans residues asparagine 687–aspartate 690. Residues serine 723–lysine 725 are G5.

It belongs to the TRAFAC class translation factor GTPase superfamily. Classic translation factor GTPase family. IF-2 subfamily.

Its subcellular location is the cytoplasm. Functionally, one of the essential components for the initiation of protein synthesis. Protects formylmethionyl-tRNA from spontaneous hydrolysis and promotes its binding to the 30S ribosomal subunits. Also involved in the hydrolysis of GTP during the formation of the 70S ribosomal complex. The chain is Translation initiation factor IF-2 from Nitratidesulfovibrio vulgaris (strain DP4) (Desulfovibrio vulgaris).